The sequence spans 131 residues: Small ribosomal subunit protein uS11 (131 aa).

It belongs to the universal ribosomal protein uS11 family. Part of the 30S ribosomal subunit. Interacts with proteins S7 and S18. Binds to IF-3.

Functionally, located on the platform of the 30S subunit, it bridges several disparate RNA helices of the 16S rRNA. Forms part of the Shine-Dalgarno cleft in the 70S ribosome. The chain is Small ribosomal subunit protein uS11 from Pelobacter propionicus (strain DSM 2379 / NBRC 103807 / OttBd1).